Consider the following 963-residue polypeptide: MLQQVNGHSLGSDAEGRASLKGDLREFLGGEIPLHQLDDLTKVNPVTLETVLRCLQARYTEDIFYTNAGCTLVALNPFKHVPQLYAPELMQEYHAAPQPQKLKPHIFTVGEQTYRNVKSLIEPVNQSIVVSGESGAGKTWTSRCLMKFYAVVAASPTSCENHKIAERIEQRILNSNPVMEAFGNACTLRNSNSSRFGKFIQLQLNRAQQMTGAAVQTYLLEKTRVACQASSERNFHIFYQICKGATKDERLQWHLPEGTAFSWLPNPESSLEEDCFEVTREAMLHLGIDTPTQNNIFKVLAGLLHLGNVHFVDSEDEALPCQVMDDTKVSVRTSALLLQLPEKMLLESMQIRTIKAGKQQQVFQKPCSRAECDTRRDCLAKLIYARLFDWLVSVINSSICADSKSWTAFIGLLDVYGFESFPNNSLEQLCINYANEKLQQHFVAHYLRAQQEEYEVEGLEWSFVNYQDNQTCLDLLEGSPISICSLINEECRLNRPSSAAQLQTRIESTLAGRPCLGHNKLSREPSFVVVHFAGPVRYHTAGLVEKNKDPVPPELTELLQQSQDPLLTMLFPANPEEKTQEELSGQSRAPALTVVSKFKASLEQLLQVLHNTTPHYIRCIKPNSQSQPQTFLQEEVLNQLEACGLVETIHISAAGFPIRVSHQNFIERYKLLRRLGPRMSSGLGGLEPAEGSSEQPLCAKEATLQPLLQDILHALPALIQTAATPSDPAKNTQIPLYCGRTKIFMTDSMLELLECGRAQMLEQCARCIQCGWRRHRLQKQEKQRRAAVLIQAAFRSWLTRKHIRRLHIAATVIKHAWHKWRIRMACLASKELDGMEEKPMPQAPGTLRSSMSPAHTRFLGAIIHLWPLGLVLANSADGVRGFQRKLVAHACLRLPSDRPSNKVQTPQQDQAGITSIRALPQGSIKFHCRKSPLQYADICPDPSASCVTGFNQILLESHRPVQV.

The region spanning 35–758 (HQLDDLTKVN…MLELLECGRA (724 aa)) is the Myosin motor domain. 132-139 (GESGAGKT) serves as a coordination point for ATP. The interval 602 to 624 (LEQLLQVLHNTTPHYIRCIKPNS) is actin-binding. 2 consecutive IQ domains span residues 762–782 (EQCA…KQEK) and 783–812 (QRRA…AATV). Residues 829–963 (SKELDGMEEK…LLESHRPVQV (135 aa)) form a myMOMA region region.

Belongs to the TRAFAC class myosin-kinesin ATPase superfamily. Myosin family. In terms of assembly, myosin is a hexamer of 2 heavy chains and 4 light chains: interacts with myosin light chains MYL9 and MYL12B.

Its subcellular location is the mitochondrion outer membrane. The protein localises to the cytoplasm. The protein resides in the cytoskeleton. Its function is as follows. Actin-based motor molecule with ATPase activity that localizes to the mitochondrion outer membrane. Motor protein that moves towards the plus-end of actin filaments. Required for mitochondrial inheritance during mitosis. May be involved in mitochondrial transport or positioning. The polypeptide is Unconventional myosin-XIX (Mus musculus (Mouse)).